A 308-amino-acid chain; its full sequence is Cell division protein FtsQ (308 aa).

Residues 1-28 (MQSLSFPPNRRTPRLAPPRRETGRRDPA) are disordered. The Cytoplasmic segment spans residues 1 to 46 (MQSLSFPPNRRTPRLAPPRRETGRRDPAPSRWAYRAQRLWLTPMFR). Basic and acidic residues predominate over residues 18-28 (PRRETGRRDPA). The chain crosses the membrane as a helical span at residues 47-67 (TALRVGLPIVGVLLVVALIFA). The Periplasmic segment spans residues 68–308 (SADRRAAMAG…RGIDTSGSDL (241 aa)). The POTRA domain occupies 92 to 160 (FMVTLLSVDG…GLLEVRVTER (69 aa)).

Belongs to the FtsQ/DivIB family. FtsQ subfamily.

The protein localises to the cell inner membrane. Functionally, essential cell division protein. The chain is Cell division protein FtsQ from Cereibacter sphaeroides (strain ATCC 17023 / DSM 158 / JCM 6121 / CCUG 31486 / LMG 2827 / NBRC 12203 / NCIMB 8253 / ATH 2.4.1.) (Rhodobacter sphaeroides).